A 312-amino-acid chain; its full sequence is Mycothiol acetyltransferase (312 aa).

N-acetyltransferase domains follow at residues 8–136 (PIIR…LPMP) and 149–301 (LRLD…HQDH). Glutamate 38 is a binding site for 1D-myo-inositol 2-(L-cysteinylamino)-2-deoxy-alpha-D-glucopyranoside. Acetyl-CoA is bound by residues 77–79 (LMV) and 85–90 (RQGIAT). Residues glutamate 175, lysine 215, and glutamate 226 each contribute to the 1D-myo-inositol 2-(L-cysteinylamino)-2-deoxy-alpha-D-glucopyranoside site. Acetyl-CoA contacts are provided by residues 230–232 (LGV) and 237–243 (EGKGVGR). Tyrosine 264 contributes to the 1D-myo-inositol 2-(L-cysteinylamino)-2-deoxy-alpha-D-glucopyranoside binding site. 269–274 (NERVVH) contacts acetyl-CoA. Residues 292 to 312 (PAKPARHQDHGRQSSPQERDA) are disordered. The segment covering 297 to 312 (RHQDHGRQSSPQERDA) has biased composition (basic and acidic residues).

Belongs to the acetyltransferase family. MshD subfamily. In terms of assembly, monomer.

It carries out the reaction 1D-myo-inositol 2-(L-cysteinylamino)-2-deoxy-alpha-D-glucopyranoside + acetyl-CoA = mycothiol + CoA + H(+). Functionally, catalyzes the transfer of acetyl from acetyl-CoA to desacetylmycothiol (Cys-GlcN-Ins) to form mycothiol. The sequence is that of Mycothiol acetyltransferase from Propionibacterium freudenreichii subsp. shermanii (strain ATCC 9614 / DSM 4902 / CIP 103027 / NCIMB 8099 / CIRM-BIA1).